A 649-amino-acid polypeptide reads, in one-letter code: Transcription factor E2-alpha (649 aa).

5 disordered regions span residues 34-107 (GKGR…SERS), 127-206 (LPGE…SAKT), 222-267 (LHPS…GLQQ), 291-325 (SAAP…SSSG), and 339-382 (DHSS…DGGL). Composition is skewed to polar residues over residues 56-76 (SSGS…SRTY) and 85-94 (SHNSLPSSTF). The span at 127–143 (LPGELGLSSPGPLSPSG) shows a compositional bias: low complexity. Phosphoserine is present on residues Ser135 and Ser140. Residues 145–156 (KSGSQYYPSYPS) are compositionally biased toward polar residues. The Nuclear localization signal signature appears at 171–177 (SKKVRKV). 2 stretches are compositionally biased toward low complexity: residues 182–193 (PSSVYPSSSGDS) and 242–259 (GDGS…SVGS). The segment covering 339 to 352 (DHSSNNFSPSPSTP) has biased composition (low complexity). A Phosphothreonine modification is found at Thr351. Residue Ser355 is modified to Phosphoserine. Arg367 carries the post-translational modification Omega-N-methylarginine. Residue Ser375 is modified to Phosphoserine. The tract at residues 385–420 (LSKMEDRLDEAIHVLRSHAVGTASDLHGLLPGHGAL) is leucine-zipper. The interval 431–547 (GGRHAGLVGG…KAEREKERRV (117 aa)) is disordered. The segment covering 448-469 (TSGTSLLHTHASLPSQASSLPD) has biased composition (polar residues). A Glycyl lysine isopeptide (Lys-Gly) (interchain with G-Cter in SUMO2) cross-link involves residue Lys494. At Ser524 the chain carries Phosphoserine. Residue Glu529 is modified to Phosphothreonine. Positions 537–547 (QKAEREKERRV) are enriched in basic and acidic residues. Residues 544–597 (ERRVANNARERLRVRDINEAFKELGRMCQLHLSSEKPQTKLLILHQAVAVILSL) enclose the bHLH domain. A Glycyl lysine isopeptide (Lys-Gly) (interchain with G-Cter in SUMO2) cross-link involves residue Lys620.

Homodimer. Heterodimer; efficient DNA binding requires dimerization with another bHLH protein. Forms a heterodimer with TWIST1 and TWIST2. Forms a heterodimer with NEUROD1; the heterodimer is inhibited in presence of ID2, but not NR0B2, to E-box element. Forms a heterodimer with TCF15; the heterodimer binds E-box element. Forms a heterodimer with MYOG; heterodimerization enhances MYOG DNA-binding and transcriptional activities. Forms a heterodimer with ATOH8; repress transcription of TCF3 and TCF3-NEUROG3 dimer-induced transactivation of E box-dependent promoters. Component of a nuclear TAL-1 complex composed at least of CBFA2T3, LDB1, TAL1 and TCF3. Interacts with NEUROD2. Interacts with EP300. Interacts with PTF1A, TGFB1I1 and UBE2I. Interacts with BHLHA9. Interacts with ASB2; the interaction is mediated by SKP2 and targets TCF3 for Notch-induced proteasomal degradation. Interacts with transcription factor ASCL5/AmeloD. As to quaternary structure, interacts with RALGAPA1. Interacts with FIGLA. In terms of assembly, forms a heterodimer with ATOH7; required for ATOH7 DNA-binding. In terms of processing, phosphorylated following NGF stimulation. Post-translationally, undergoes Notch-induced ubiquitination and subsequent proteasomal degradation which is mediated by ASB1 or ASB2, the substrate-recognition components of probable ECS E3 ubiquitin-protein ligase complexes.

Its subcellular location is the nucleus. Transcriptional regulator. Involved in the initiation of neuronal differentiation and mesenchymal to epithelial transition. Heterodimers between TCF3 and tissue-specific basic helix-loop-helix (bHLH) proteins play major roles in determining tissue-specific cell fate during embryogenesis, like muscle or early B-cell differentiation. Together with TCF15, required for the mesenchymal to epithelial transition. Dimers bind DNA on E-box motifs: 5'-CANNTG-3'. Binds to the kappa-E2 site in the kappa immunoglobulin gene enhancer. Binds to IEB1 and IEB2, which are short DNA sequences in the insulin gene transcription control region. Its function is as follows. Facilitates ATOH7 binding to DNA at the consensus sequence 5'-CAGGTG-3', and positively regulates transcriptional activity. This is Transcription factor E2-alpha (TCF3) from Mesocricetus auratus (Golden hamster).